The chain runs to 76 residues: cAMP-dependent protein kinase inhibitor alpha (76 aa).

Position 2 is an N-acetylthreonine (Thr2). The segment at 49-76 (KTEGEDDGQRSSTEQSGEAQGEAAKSES) is disordered.

It belongs to the PKI family. In terms of tissue distribution, present at high levels in skeletal muscle and brain but is present at lower levels in heart, testis and liver.

Extremely potent competitive inhibitor of cAMP-dependent protein kinase activity, this protein interacts with the catalytic subunit of the enzyme after the cAMP-induced dissociation of its regulatory chains. This chain is cAMP-dependent protein kinase inhibitor alpha (Pkia), found in Mus musculus (Mouse).